The following is a 308-amino-acid chain: SGSLLGMCLIVRIITGLFLAAHYTADTSLAFNSVAHTCRNVQFGWLIRNLHANGASLFFICIYLHIGRGLYYGSYLNKETWNIGVILLLALMATAFVGYVLPWGQMSFWGATVITNLFSAIPYIGQTLVEWAWGGFSVDNPTLTRFFALHFLLPFVIAGLTLVHLTFLHETGSNNPLGIPSDCDKIPFHPYYSTKDVLGFALLLTPLIALALFSPNLLGDPENFTPANPLATPPHIKPEWYFLFAYAILRSIPNKLGGVLALAASVLVLFLIPLLHNSKLRSMTFRPLSQILFWALVANLLVLTWVGS.

A run of 4 helical transmembrane segments spans residues 1–21, 45–66, 81–101, and 146–166; these read SGSL…FLAA, WLIR…YLHI, WNIG…GYVL, and FFAL…VHLT. Residues histidine 51 and histidine 65 each coordinate heme b. The heme b site is built by histidine 150 and histidine 164. Residue histidine 169 coordinates a ubiquinone. The next 3 membrane-spanning stretches (helical) occupy residues 194–214, 256–276, and 288–308; these read TKDV…ALFS, LGGV…PLLH, and LSQI…WVGS.

It belongs to the cytochrome b family. In terms of assembly, the cytochrome bc1 complex contains 11 subunits: 3 respiratory subunits (MT-CYB, CYC1 and UQCRFS1), 2 core proteins (UQCRC1 and UQCRC2) and 6 low-molecular weight proteins (UQCRH/QCR6, UQCRB/QCR7, UQCRQ/QCR8, UQCR10/QCR9, UQCR11/QCR10 and a cleavage product of UQCRFS1). This cytochrome bc1 complex then forms a dimer. The cofactor is heme b.

It localises to the mitochondrion inner membrane. In terms of biological role, component of the ubiquinol-cytochrome c reductase complex (complex III or cytochrome b-c1 complex) that is part of the mitochondrial respiratory chain. The b-c1 complex mediates electron transfer from ubiquinol to cytochrome c. Contributes to the generation of a proton gradient across the mitochondrial membrane that is then used for ATP synthesis. The chain is Cytochrome b (MT-CYB) from Garritornis isidorei (Papuan babbler).